Consider the following 363-residue polypeptide: MSAIYNFCAGPAMLPTAVMKKAQQELLDWNGQGVSVMEISHRSKEFIALTKQAEADLRELMHIPANYHVLFMHGGGRGQFSAVVNNFLGNDGRALYLVSGQWSSSALAEAQKLAGDAQIDSLNIVEKHNGLNAVVLPDLHKIDADYRYVHYCPNETVDGIEIFDELDSPWPIVADLSSTIMSREIDVSRYGLIYAGAQKNIGPSGLSIVIVRDDMLKLPSLVQSSIMDYRLAVEHDSMFNTPPTFAWYLAAEVFAWLKSIGGIASIAKINQQKAQMLYQCIDSNTFYRNGVVASNRSQMNVTFQLADETLDGEFLKQAQVAGLVALKGHRIVGGMRASLYNAMPLEGVIALVKFMNEFAAKYR.

Arginine 42 is an L-glutamate binding site. Residues 76–77 (GR), tryptophan 102, threonine 156, aspartate 175, and glutamine 198 each bind pyridoxal 5'-phosphate. An N6-(pyridoxal phosphate)lysine modification is found at lysine 199. 240 to 241 (NT) contacts pyridoxal 5'-phosphate.

This sequence belongs to the class-V pyridoxal-phosphate-dependent aminotransferase family. SerC subfamily. In terms of assembly, homodimer. Requires pyridoxal 5'-phosphate as cofactor.

It is found in the cytoplasm. It catalyses the reaction O-phospho-L-serine + 2-oxoglutarate = 3-phosphooxypyruvate + L-glutamate. The catalysed reaction is 4-(phosphooxy)-L-threonine + 2-oxoglutarate = (R)-3-hydroxy-2-oxo-4-phosphooxybutanoate + L-glutamate. The protein operates within amino-acid biosynthesis; L-serine biosynthesis; L-serine from 3-phospho-D-glycerate: step 2/3. Its pathway is cofactor biosynthesis; pyridoxine 5'-phosphate biosynthesis; pyridoxine 5'-phosphate from D-erythrose 4-phosphate: step 3/5. Functionally, catalyzes the reversible conversion of 3-phosphohydroxypyruvate to phosphoserine and of 3-hydroxy-2-oxo-4-phosphonooxybutanoate to phosphohydroxythreonine. This is Phosphoserine aminotransferase from Shewanella sp. (strain W3-18-1).